The chain runs to 537 residues: MKLLAVRRLLRIQRVVIRYRLDDLLFEQPLLPWWLASLRLLMPWRWLPRKPLALSRGARLRLALQDLGPIFIKFGQLLSTRRDLLPTDIADELMLLQDRVPPFDPQHAVALIEEQLGAKVGEVFSRFDVEPLASASVAQVHAARLKSGEEVVVKVVRPGLKPVIAQDLAWLFLIAKAAERASADARRLHPVEIVGDYEKTIYDELDLLREAANASQLRRNFEGSELMYVPQVYWDLCRPKVLVMERIYGVPVTDMATLADQRTDMKMLAERGVEVFFTQVFRDSFFHADMHPGNIFVSTVKPWSPQYIAIDCGIVGSLTAEDQDYLARNLIAFFKRDYRRVAQLHIDSGWVPAQTKVNEFEAAIRTVCEPIFEKPLKDISFGQVLMRLFQTARRFNMEVQPQLVLLQKTLLNIEGLGRQLYPDLDLWSTAKPFLERWMRERMSPKAVIGNLYNQAEQLPHLADMTRDLLERLSQPHLNDAQLPERRRQGDNWALRLLGAGLLGGGATLAAGAVSLSAPAAWPAWLMLAAGLYLIVRR.

The chain crosses the membrane as a helical span at residues 24–44; that stretch reads LLFEQPLLPWWLASLRLLMPW. A Protein kinase domain is found at 126–494; it reads RFDVEPLASA…RRRQGDNWAL (369 aa). Residues 132–140 and lysine 154 each bind ATP; that span reads LASASVAQV. Catalysis depends on aspartate 289, which acts as the Proton acceptor. The next 2 membrane-spanning stretches (helical) occupy residues 493–513 and 515–535; these read ALRL…AGAV and LSAP…YLIV.

Belongs to the ABC1 family. UbiB subfamily.

Its subcellular location is the cell inner membrane. It participates in cofactor biosynthesis; ubiquinone biosynthesis [regulation]. Functionally, is probably a protein kinase regulator of UbiI activity which is involved in aerobic coenzyme Q (ubiquinone) biosynthesis. This Pseudomonas entomophila (strain L48) protein is Probable protein kinase UbiB.